The primary structure comprises 353 residues: Abasic site processing protein HMCES (353 aa).

C2 (nucleophile) is an active-site residue. C2 bears the Thiazolidine linkage to a ring-opened DNA abasic site mark. E127 is an active-site residue. Glycyl lysine isopeptide (Lys-Gly) (interchain with G-Cter in SUMO2) cross-links involve residues K148 and K151. S160 carries the post-translational modification Phosphoserine. Glycyl lysine isopeptide (Lys-Gly) (interchain with G-Cter in SUMO2) cross-links involve residues K274 and K275. The disordered stretch occupies residues 292–353 (TKSPKKEVPD…DEPMAKKPNS (62 aa)). S294 bears the Phosphoserine mark. The segment covering 295 to 307 (PKKEVPDSPKKDA) has biased composition (basic and acidic residues). A Glycyl lysine isopeptide (Lys-Gly) (interchain with G-Cter in SUMO2) cross-link involves residue K305. S321 is modified (phosphoserine). Residues 332–338 (SFLDRWL) carry the PIP-box motif. Positions 336–353 (RWLKQEKEDEPMAKKPNS) are enriched in basic and acidic residues. Glycyl lysine isopeptide (Lys-Gly) (interchain with G-Cter in SUMO2) cross-links involve residues K339 and K342.

It belongs to the SOS response-associated peptidase family. As to quaternary structure, interacts (via PIP-box motif) with PCNA. As to expression, expressed in embryonic stem cells.

It localises to the chromosome. With respect to regulation, formation and reversal of DNA-protein cross-link depends on DNA context. Catalyzes formation of the thiazolidine linkage in presence of abasic sites in single-stranded DNA. Mediates the reversal of the thiazolidine cross-link in presence of double stranded DNA. Sensor of abasic sites in single-stranded DNA (ssDNA) required to preserve genome integrity by promoting error-free repair of abasic sites. Acts as an enzyme that recognizes and binds abasic sites in ssDNA at replication forks and chemically modifies the lesion by forming a covalent cross-link with DNA: forms a stable thiazolidine linkage between a ring-opened abasic site and the alpha-amino and sulfhydryl substituents of its N-terminal catalytic cysteine residue. Promotes error-free repair by protecting abasic sites from translesion synthesis (TLS) polymerases and endonucleases that are error-prone and would generate mutations and double-strand breaks. The HMCES DNA-protein cross-link is then either reversed or degraded. HMCES is able to catalyze the reversal of its thiazolidine cross-link and cycle between a cross-link and a non-cross-linked state depending on DNA context: mediates self-reversal of the thiazolidine cross-link in double stranded DNA, allowing APEX1 to initiate downstream repair of abasic sites. The HMCES DNA-protein cross-link can also be degraded by the SPRTN metalloprotease following unfolding by the BRIP1/FANCJ helicase. Has preference for ssDNA, but can also accommodate double-stranded DNA with 3' or 5' overhang (dsDNA), and dsDNA-ssDNA 3' junction. Plays a protective role during somatic hypermutation of immunoglobulin genes in B-cells: acts via its ability to form covalent cross-links with abasic sites, thereby limiting the accumulation of deletions in somatic hypermutation target regions. Also involved in class switch recombination (CSR) in B-cells independently of the formation of a DNA-protein cross-link: acts by binding and protecting ssDNA overhangs to promote DNA double-strand break repair through the microhomology-mediated alternative-end-joining (Alt-EJ) pathway. Acts as a protease: mediates autocatalytic processing of its N-terminal methionine in order to expose the catalytic cysteine. The polypeptide is Abasic site processing protein HMCES (Mus musculus (Mouse)).